Consider the following 306-residue polypeptide: Putative S-adenosyl-L-methionine-dependent methyltransferase MAP_4190c (306 aa).

Residues Asp129 and 158–159 (DL) contribute to the S-adenosyl-L-methionine site.

The protein belongs to the UPF0677 family.

Functionally, exhibits S-adenosyl-L-methionine-dependent methyltransferase activity. The polypeptide is Putative S-adenosyl-L-methionine-dependent methyltransferase MAP_4190c (Mycolicibacterium paratuberculosis (strain ATCC BAA-968 / K-10) (Mycobacterium paratuberculosis)).